A 250-amino-acid chain; its full sequence is Petrobactin import ATP-binding protein FatE (250 aa).

In terms of domain architecture, ABC transporter spans 2–236 (IKIDNVKKFY…TLLTDIFETR (235 aa)). Residue 34–41 (GPNGAGKS) coordinates ATP.

Belongs to the ABC transporter superfamily. As to quaternary structure, the complex is composed of two ATP-binding proteins (FatE), two transmembrane proteins (FatC and FatD) and a solute-binding protein (FpuA).

It is found in the cell membrane. It catalyses the reaction a Fe(III)-siderophore(out) + ATP + H2O = a Fe(III)-siderophore(in) + ADP + phosphate + H(+). Part of an ABC transporter complex involved in ferric-petrobactin uptake. Probably responsible for energy coupling to the transport system. The protein is Petrobactin import ATP-binding protein FatE of Bacillus anthracis.